Reading from the N-terminus, the 81-residue chain is Photosystem I iron-sulfur center (81 aa).

2 4Fe-4S ferredoxin-type domains span residues 2–31 (SHSV…MVPW) and 39–68 (IASA…VRVY). Residues C11, C14, C17, C21, C48, C51, C54, and C58 each contribute to the [4Fe-4S] cluster site.

In terms of assembly, the eukaryotic PSI reaction center is composed of at least 11 subunits. Requires [4Fe-4S] cluster as cofactor.

It is found in the plastid. The protein resides in the chloroplast thylakoid membrane. The enzyme catalyses reduced [plastocyanin] + hnu + oxidized [2Fe-2S]-[ferredoxin] = oxidized [plastocyanin] + reduced [2Fe-2S]-[ferredoxin]. Functionally, apoprotein for the two 4Fe-4S centers FA and FB of photosystem I (PSI); essential for photochemical activity. FB is the terminal electron acceptor of PSI, donating electrons to ferredoxin. The C-terminus interacts with PsaA/B/D and helps assemble the protein into the PSI complex. Required for binding of PsaD and PsaE to PSI. PSI is a plastocyanin/cytochrome c6-ferredoxin oxidoreductase, converting photonic excitation into a charge separation, which transfers an electron from the donor P700 chlorophyll pair to the spectroscopically characterized acceptors A0, A1, FX, FA and FB in turn. This is Photosystem I iron-sulfur center from Emiliania huxleyi (Coccolithophore).